Consider the following 118-residue polypeptide: Protein TusC (118 aa).

This sequence belongs to the DsrF/TusC family. As to quaternary structure, heterohexamer, formed by a dimer of trimers. The hexameric TusBCD complex contains 2 copies each of TusB, TusC and TusD. The TusBCD complex interacts with TusE.

It localises to the cytoplasm. Its function is as follows. Part of a sulfur-relay system required for 2-thiolation of 5-methylaminomethyl-2-thiouridine (mnm(5)s(2)U) at tRNA wobble positions. The protein is Protein TusC of Salmonella paratyphi C (strain RKS4594).